The chain runs to 240 residues: Probable alpha-aspartyl dipeptidase (240 aa).

Active-site charge relay system residues include Ser125, Asp140, and His162.

It belongs to the peptidase S51 family.

Its subcellular location is the cytoplasm. It catalyses the reaction Dipeptidase E catalyzes the hydrolysis of dipeptides Asp-|-Xaa. It does not act on peptides with N-terminal Glu, Asn or Gln, nor does it cleave isoaspartyl peptides.. In terms of biological role, hydrolyzes dipeptides containing N-terminal aspartate residues. This is Probable alpha-aspartyl dipeptidase from Drosophila melanogaster (Fruit fly).